Here is a 289-residue protein sequence, read N- to C-terminus: MKLIILEHYSQASEWAAKYIRNRIIQFNPGPEKYFTLGLPTGSTPLGCYKKLIEYYKNGDLPFKYVKTFNMDEYVGLPRDHPESYHSFMWNNFFKHIDIHPENTHILDGNAVDLQAECDAFEEKIKAAGGIELFVGGIGPDGHIAFNEPGSSLVSRTRVKTLAMDTILANARFFDGELTKVPTMALTVGVGTVMDAREVMILITGAHKAFALYKAIEEGVNHMWTVSAFQQHPRTVFVCDEDATLELKVKTVKYFKGLMLVHNKLVDPLYSIKEKETEKSQSSKKPYSD.

Lys64 bears the N6-acetyllysine mark. Asp72 functions as the Proton acceptor; for enolization step in the catalytic mechanism. Asp141 serves as the catalytic For ring-opening step. Catalysis depends on His143, which acts as the Proton acceptor; for ring-opening step. Glu148 serves as the catalytic For ring-opening step. At Thr161 the chain carries Phosphothreonine.

It belongs to the glucosamine/galactosamine-6-phosphate isomerase family. Homohexamer.

It localises to the cytoplasm. It carries out the reaction alpha-D-glucosamine 6-phosphate + H2O = beta-D-fructose 6-phosphate + NH4(+). Its pathway is nucleotide-sugar biosynthesis; UDP-N-acetyl-alpha-D-glucosamine biosynthesis; alpha-D-glucosamine 6-phosphate from D-fructose 6-phosphate: step 1/1. Its activity is regulated as follows. Allosterically activated by N-acetylglucosamine-6-phosphate (GlcNAc6P). In terms of biological role, catalyzes the reversible conversion of alpha-D-glucosamine 6-phosphate (GlcN-6P) into beta-D-fructose 6-phosphate (Fru-6P) and ammonium ion, a regulatory reaction step in de novo uridine diphosphate-N-acetyl-alpha-D-glucosamine (UDP-GlcNAc) biosynthesis via hexosamine pathway. Deamination is coupled to aldo-keto isomerization mediating the metabolic flux from UDP-GlcNAc toward Fru-6P. At high ammonium level can drive amination and isomerization of Fru-6P toward hexosamines and UDP-GlcNAc synthesis. Has a role in fine tuning the metabolic fluctuations of cytosolic UDP-GlcNAc and their effects on hyaluronan synthesis that occur during tissue remodeling. Seems to trigger calcium oscillations in mammalian eggs. These oscillations serve as the essential trigger for egg activation and early development of the embryo. The sequence is that of Glucosamine-6-phosphate deaminase 1 from Pongo abelii (Sumatran orangutan).